We begin with the raw amino-acid sequence, 161 residues long: Phosphopantetheine adenylyltransferase (161 aa).

Thr-9 serves as a coordination point for substrate. Residues 9-10 (TF) and His-17 contribute to the ATP site. The substrate site is built by Lys-41, Leu-73, and Arg-87. ATP-binding positions include 88–90 (GMR), Glu-98, and 123–129 (WSYVSST).

The protein belongs to the bacterial CoaD family. In terms of assembly, homohexamer. Mg(2+) serves as cofactor.

Its subcellular location is the cytoplasm. The catalysed reaction is (R)-4'-phosphopantetheine + ATP + H(+) = 3'-dephospho-CoA + diphosphate. Its pathway is cofactor biosynthesis; coenzyme A biosynthesis; CoA from (R)-pantothenate: step 4/5. Functionally, reversibly transfers an adenylyl group from ATP to 4'-phosphopantetheine, yielding dephospho-CoA (dPCoA) and pyrophosphate. This Actinobacillus succinogenes (strain ATCC 55618 / DSM 22257 / CCUG 43843 / 130Z) protein is Phosphopantetheine adenylyltransferase.